The sequence spans 29 residues: Cytochrome b6-f complex subunit 8 (29 aa).

A helical transmembrane segment spans residues 3-23; sequence IVSFAWAALMVVFTFSLSLVV.

This sequence belongs to the PetN family. As to quaternary structure, the 4 large subunits of the cytochrome b6-f complex are cytochrome b6, subunit IV (17 kDa polypeptide, PetD), cytochrome f and the Rieske protein, while the 4 small subunits are PetG, PetL, PetM and PetN. The complex functions as a dimer.

The protein resides in the plastid. It localises to the chloroplast thylakoid membrane. Functionally, component of the cytochrome b6-f complex, which mediates electron transfer between photosystem II (PSII) and photosystem I (PSI), cyclic electron flow around PSI, and state transitions. This is Cytochrome b6-f complex subunit 8 from Phalaenopsis aphrodite subsp. formosana (Moth orchid).